The primary structure comprises 317 residues: 2-oxoglutarate and iron-dependent oxygenase domain-containing protein 3 (317 aa).

The disordered stretch occupies residues 1–34 (MATRHRRRGGSAPSWAKPGKPGERPGGPKKSRGR). Topologically, residues 1–39 (MATRHRRRGGSAPSWAKPGKPGERPGGPKKSRGRTSWKS) are cytoplasmic. A helical; Signal-anchor for type II membrane protein membrane pass occupies residues 40–60 (LLIWGVFGVTLGLMAGYYLWG). The Lumenal portion of the chain corresponds to 61–317 (ELITDDSVTE…EHAIGDPTWT (257 aa)). 2 N-linked (GlcNAc...) asparagine glycosylation sites follow: N195 and N213. Residues 205-307 (KPTFFSRMNS…AITISFTCNP (103 aa)) enclose the Fe2OG dioxygenase domain. The Fe cation site is built by H228 and D230. N265 is a glycosylation site (N-linked (GlcNAc...) asparagine). H286 serves as a coordination point for Fe cation. Residue R296 is part of the active site. R296 contacts 2-oxoglutarate.

The protein belongs to the OGFOD3 family. Requires Fe(2+) as cofactor. L-ascorbate serves as cofactor.

Its subcellular location is the membrane. The polypeptide is 2-oxoglutarate and iron-dependent oxygenase domain-containing protein 3 (ogfod3) (Xenopus tropicalis (Western clawed frog)).